The chain runs to 349 residues: Nicotinate-nucleotide--dimethylbenzimidazole phosphoribosyltransferase (349 aa).

The tract at residues 1-20 (MEFATVSPPDPGTAAAARAR) is disordered. Glu-313 (proton acceptor) is an active-site residue.

This sequence belongs to the CobT family.

It carries out the reaction 5,6-dimethylbenzimidazole + nicotinate beta-D-ribonucleotide = alpha-ribazole 5'-phosphate + nicotinate + H(+). It functions in the pathway nucleoside biosynthesis; alpha-ribazole biosynthesis; alpha-ribazole from 5,6-dimethylbenzimidazole: step 1/2. Its function is as follows. Catalyzes the synthesis of alpha-ribazole-5'-phosphate from nicotinate mononucleotide (NAMN) and 5,6-dimethylbenzimidazole (DMB). This chain is Nicotinate-nucleotide--dimethylbenzimidazole phosphoribosyltransferase, found in Mycolicibacterium paratuberculosis (strain ATCC BAA-968 / K-10) (Mycobacterium paratuberculosis).